Here is a 201-residue protein sequence, read N- to C-terminus: Holliday junction branch migration complex subunit RuvA (201 aa).

The domain I stretch occupies residues Met-1–Leu-64. The domain II stretch occupies residues Asp-65–Thr-143. A flexible linker region spans residues Ala-144 to Glu-154. The tract at residues Glu-154–Phe-201 is domain III.

The protein belongs to the RuvA family. Homotetramer. Forms an RuvA(8)-RuvB(12)-Holliday junction (HJ) complex. HJ DNA is sandwiched between 2 RuvA tetramers; dsDNA enters through RuvA and exits via RuvB. An RuvB hexamer assembles on each DNA strand where it exits the tetramer. Each RuvB hexamer is contacted by two RuvA subunits (via domain III) on 2 adjacent RuvB subunits; this complex drives branch migration. In the full resolvosome a probable DNA-RuvA(4)-RuvB(12)-RuvC(2) complex forms which resolves the HJ.

It localises to the cytoplasm. Functionally, the RuvA-RuvB-RuvC complex processes Holliday junction (HJ) DNA during genetic recombination and DNA repair, while the RuvA-RuvB complex plays an important role in the rescue of blocked DNA replication forks via replication fork reversal (RFR). RuvA specifically binds to HJ cruciform DNA, conferring on it an open structure. The RuvB hexamer acts as an ATP-dependent pump, pulling dsDNA into and through the RuvAB complex. HJ branch migration allows RuvC to scan DNA until it finds its consensus sequence, where it cleaves and resolves the cruciform DNA. The polypeptide is Holliday junction branch migration complex subunit RuvA (Chlorobaculum tepidum (strain ATCC 49652 / DSM 12025 / NBRC 103806 / TLS) (Chlorobium tepidum)).